Reading from the N-terminus, the 1191-residue chain is Puratrophin-1 (1191 aa).

Disordered regions lie at residues 1-152 (MERP…DPVG) and 707-728 (AGGG…SDPR). Ser-64 is subject to Phosphoserine. Over residues 111–120 (SHLSLAQGES) the composition is skewed to polar residues. The DH domain maps to 732 to 908 (RLQLVLAEMV…HFQLRHGNDL (177 aa)). One can recognise a PH domain in the interval 920–1027 (NLKEQGQLVR…WTADISHLLW (108 aa)). The interval 1150–1176 (SLTAEDSEISSQCPSASGSSGSDSSCV) is disordered. Residues 1159 to 1176 (SSQCPSASGSSGSDSSCV) show a composition bias toward low complexity.

In terms of tissue distribution, expressed in kidney, Leydig cells in the testis, epithelial cells in the prostate gland and Langerhans islet in the pancreas. Isoform 1 and isoform 3 are strongly expressed in Purkinje cells and to a lower extent in other neurons (at protein level). Widely expressed at low levels. More strongly expressed in testis and pancreas.

Its function is as follows. Possible role in intracellular signaling and cytoskeleton dynamics at the Golgi. The sequence is that of Puratrophin-1 (PLEKHG4) from Homo sapiens (Human).